We begin with the raw amino-acid sequence, 117 residues long: Cell cycle protein GpsB (117 aa).

Residues 32 to 70 (LDNVIKDYDAFVKENQRLQDENERLLAKVDELTRQVQVG) are a coiled coil.

It belongs to the GpsB family. In terms of assembly, forms polymers through the coiled coil domains. Interacts with PBP1, MreC and EzrA.

It is found in the cytoplasm. Divisome component that associates with the complex late in its assembly, after the Z-ring is formed, and is dependent on DivIC and PBP2B for its recruitment to the divisome. Together with EzrA, is a key component of the system that regulates PBP1 localization during cell cycle progression. Its main role could be the removal of PBP1 from the cell pole after pole maturation is completed. Also contributes to the recruitment of PBP1 to the division complex. Not essential for septum formation. This is Cell cycle protein GpsB from Levilactobacillus brevis (strain ATCC 367 / BCRC 12310 / CIP 105137 / JCM 1170 / LMG 11437 / NCIMB 947 / NCTC 947) (Lactobacillus brevis).